The following is a 211-amino-acid chain: MGYDLYVVTDETIGRGRTHTDLARLAAAGGADVIQLRDKRLPGRDLLSAAVAIREITTDAGALFIVNDRLDVAIAAGADGVHLGANDLPVGEARRIVPPGFLIGASVGSVAAAVRAAAEGADYVALSPTFATGSKDDAGPGCGLAALKEIRAAVSLPLVAIGGITAANVADVIAAGADGVAVISAVVGEGDVTAAARSLRDRIAAAKAEGR.

4-amino-2-methyl-5-(diphosphooxymethyl)pyrimidine-binding positions include 35-39 (QLRDK) and Asn-67. Residues Asp-68 and Asp-87 each coordinate Mg(2+). Ser-106 is a binding site for 4-amino-2-methyl-5-(diphosphooxymethyl)pyrimidine. 132-134 (TGS) is a 2-[(2R,5Z)-2-carboxy-4-methylthiazol-5(2H)-ylidene]ethyl phosphate binding site. Lys-135 contacts 4-amino-2-methyl-5-(diphosphooxymethyl)pyrimidine. 2-[(2R,5Z)-2-carboxy-4-methylthiazol-5(2H)-ylidene]ethyl phosphate is bound by residues Gly-163 and 183–184 (IS).

This sequence belongs to the thiamine-phosphate synthase family. Mg(2+) serves as cofactor.

The catalysed reaction is 2-[(2R,5Z)-2-carboxy-4-methylthiazol-5(2H)-ylidene]ethyl phosphate + 4-amino-2-methyl-5-(diphosphooxymethyl)pyrimidine + 2 H(+) = thiamine phosphate + CO2 + diphosphate. It catalyses the reaction 2-(2-carboxy-4-methylthiazol-5-yl)ethyl phosphate + 4-amino-2-methyl-5-(diphosphooxymethyl)pyrimidine + 2 H(+) = thiamine phosphate + CO2 + diphosphate. The enzyme catalyses 4-methyl-5-(2-phosphooxyethyl)-thiazole + 4-amino-2-methyl-5-(diphosphooxymethyl)pyrimidine + H(+) = thiamine phosphate + diphosphate. Its pathway is cofactor biosynthesis; thiamine diphosphate biosynthesis; thiamine phosphate from 4-amino-2-methyl-5-diphosphomethylpyrimidine and 4-methyl-5-(2-phosphoethyl)-thiazole: step 1/1. Condenses 4-methyl-5-(beta-hydroxyethyl)thiazole monophosphate (THZ-P) and 2-methyl-4-amino-5-hydroxymethyl pyrimidine pyrophosphate (HMP-PP) to form thiamine monophosphate (TMP). This Methanoculleus marisnigri (strain ATCC 35101 / DSM 1498 / JR1) protein is Thiamine-phosphate synthase.